A 286-amino-acid polypeptide reads, in one-letter code: Pantothenate synthetase (286 aa).

30–37 serves as a coordination point for ATP; sequence MGNLHEGH. His37 acts as the Proton donor in catalysis. Gln64 lines the (R)-pantoate pocket. Gln64 is a binding site for beta-alanine. Residue 151 to 154 participates in ATP binding; the sequence is GKKD. Gln157 lines the (R)-pantoate pocket. ATP-binding positions include Leu180 and 188-191; that span reads LSSR.

Belongs to the pantothenate synthetase family. Homodimer.

It is found in the cytoplasm. It catalyses the reaction (R)-pantoate + beta-alanine + ATP = (R)-pantothenate + AMP + diphosphate + H(+). It participates in cofactor biosynthesis; (R)-pantothenate biosynthesis; (R)-pantothenate from (R)-pantoate and beta-alanine: step 1/1. Its function is as follows. Catalyzes the condensation of pantoate with beta-alanine in an ATP-dependent reaction via a pantoyl-adenylate intermediate. The polypeptide is Pantothenate synthetase (Leptothrix cholodnii (strain ATCC 51168 / LMG 8142 / SP-6) (Leptothrix discophora (strain SP-6))).